Reading from the N-terminus, the 198-residue chain is Penicillin-binding protein activator LpoB (198 aa).

The signal sequence occupies residues 1–19; that stretch reads MIRSVNRTGALMMALILSG. Cys20 carries the N-palmitoyl cysteine lipid modification. The S-diacylglycerol cysteine moiety is linked to residue Cys20. Residues 26–37 show a composition bias toward low complexity; sequence QPAPVEPTQPVE. A disordered region spans residues 26-59; the sequence is QPAPVEPTQPVEPVQPVPQPEQPIPQPQPVPQPP. Pro residues predominate over residues 38 to 59; the sequence is PVQPVPQPEQPIPQPQPVPQPP.

Belongs to the LpoB family. In terms of assembly, interacts with PBP1b.

The protein resides in the cell outer membrane. Regulator of peptidoglycan synthesis that is essential for the function of penicillin-binding protein 1B (PBP1b). This is Penicillin-binding protein activator LpoB from Pantoea ananatis (strain LMG 20103).